The sequence spans 208 residues: MSSFQLPKLSYDYDELEPYIDSNTLSIHHGKHHATYVNNLNAALENYSELHNKSLEELLCNLETLPKEIVTAVRNNGGGHYCHSLFWEVMSPRGGGEPNGDVAKVIDYYFNTFDNLKDQLSKAAISRFGSGYGWLVLDGEELSVMSTPNQDTPLQEGKIPLLVIDVWEHAYYLKYQNRRPEFVTNWWHTVNWDRVNEKYLQAIQSQKH.

The Mn(2+) site is built by H28, H83, D165, and H169.

It belongs to the iron/manganese superoxide dismutase family. In terms of assembly, homodimer. Requires Mn(2+) as cofactor.

It catalyses the reaction 2 superoxide + 2 H(+) = H2O2 + O2. Its function is as follows. Destroys superoxide anion radicals which are normally produced within the cells and which are toxic to biological systems. This is Superoxide dismutase [Mn] 2 (sodA2) from Bacillus anthracis.